Consider the following 301-residue polypeptide: Small ribosomal subunit biogenesis GTPase RsgA (301 aa).

One can recognise a CP-type G domain in the interval 63–224 (INALVRPPIA…IADTPGFSSY (162 aa)). GTP is bound by residues 112–115 (SKAD) and 167–175 (GQTGAGKST). Residues Cys248, Cys253, His255, and Cys261 each contribute to the Zn(2+) site.

This sequence belongs to the TRAFAC class YlqF/YawG GTPase family. RsgA subfamily. Monomer. Associates with 30S ribosomal subunit, binds 16S rRNA. Zn(2+) serves as cofactor.

It is found in the cytoplasm. In terms of biological role, one of several proteins that assist in the late maturation steps of the functional core of the 30S ribosomal subunit. Helps release RbfA from mature subunits. May play a role in the assembly of ribosomal proteins into the subunit. Circularly permuted GTPase that catalyzes slow GTP hydrolysis, GTPase activity is stimulated by the 30S ribosomal subunit. The protein is Small ribosomal subunit biogenesis GTPase RsgA of Leuconostoc citreum (strain KM20).